Consider the following 455-residue polypeptide: Adenylyltransferase and sulfurtransferase UBA4 (455 aa).

Residues G93, D114, 121–125 (SNLHR), K138, and 182–183 (DH) contribute to the ATP site. Zn(2+)-binding residues include C224 and C227. Residue C241 is the Glycyl thioester intermediate; for adenylyltransferase activity of the active site. C302 and C305 together coordinate Zn(2+). Residues 355-453 (QSREHTLIDV…WSEDIDAAFP (99 aa)) form the Rhodanese domain. Residue C413 is the Cysteine persulfide intermediate; for sulfurtransferase activity of the active site.

It in the N-terminal section; belongs to the HesA/MoeB/ThiF family. UBA4 subfamily. The cofactor is Zn(2+).

Its subcellular location is the cytoplasm. The protein resides in the cytosol. It functions in the pathway tRNA modification; 5-methoxycarbonylmethyl-2-thiouridine-tRNA biosynthesis. Plays a central role in 2-thiolation of mcm(5)S(2)U at tRNA wobble positions of cytosolic tRNA(Lys), tRNA(Glu) and tRNA(Gln). Acts by mediating the C-terminal thiocarboxylation of sulfur carrier URM1. Its N-terminus first activates URM1 as acyl-adenylate (-COAMP), then the persulfide sulfur on the catalytic cysteine is transferred to URM1 to form thiocarboxylation (-COSH) of its C-terminus. The reaction probably involves hydrogen sulfide that is generated from the persulfide intermediate and that acts as a nucleophile towards URM1. Subsequently, a transient disulfide bond is formed. Does not use thiosulfate as sulfur donor; NFS1 probably acting as a sulfur donor for thiocarboxylation reactions. Prior mcm(5) tRNA modification by the elongator complex is required for 2-thiolation. May also be involved in protein urmylation. This is Adenylyltransferase and sulfurtransferase UBA4 from Lodderomyces elongisporus (strain ATCC 11503 / CBS 2605 / JCM 1781 / NBRC 1676 / NRRL YB-4239) (Yeast).